Consider the following 540-residue polypeptide: Probable quinate permease (540 aa).

Residues 1-22 (MSILALVEDRPTPKEVYNWRIY) lie on the Cytoplasmic side of the membrane. A helical membrane pass occupies residues 23–43 (LLAAVASFTSCMIGYDSAFIG). Over 44 to 74 (TTLALGSFREEFEFTTMEPAAVNRVSANIVS) the chain is Extracellular. Residues 75-95 (CYQAGAFFGAFFAYPIGHFWG) form a helical membrane-spanning segment. The Cytoplasmic segment spans residues 96 to 97 (RK). The chain crosses the membrane as a helical span at residues 98 to 118 (WGLLSAAAIFTLGAGLMLGAN). Residues 119 to 130 (GDRGLGLIYGGR) are Extracellular-facing. The helical transmembrane segment at 131–151 (VLAGIGVGAGSNITPIYISEL) threads the bilayer. The Cytoplasmic portion of the chain corresponds to 152-157 (APPSIR). A helical transmembrane segment spans residues 158–178 (GHLVGVYELGWQIGGLVGFWI). Residues 179–193 (NYGVSETLAPSHKQW) lie on the Extracellular side of the membrane. A helical transmembrane segment spans residues 194–214 (IIPFAVQLIPSGLLLIGAVFL). The Cytoplasmic portion of the chain corresponds to 215–285 (RESPRWLFSS…AGTNKKVMYR (71 aa)). A helical membrane pass occupies residues 286-306 (LFLGSMLFFWQNGSGINAINY). At 307-325 (YSPTVFKSIGLRGTNTGMF) the chain is on the extracellular side. The helical transmembrane segment at 326–346 (STGIFGVVKTVVTFIWLLYLI) threads the bilayer. Residues 347 to 352 (DRMGRR) are Cytoplasmic-facing. Residues 353–373 (LLLLVGAAGASVCLWIVGAYI) form a helical membrane-spanning segment. Topologically, residues 374 to 387 (KIANPAKNGNGEMT) are extracellular. A helical membrane pass occupies residues 388-408 (GGGIAAMFFFYLYTVFYTPSW). Topologically, residues 409–456 (NGTPWVMNSEMFEPNMRSLAQACAAASNWLWNFLISRFTPQMFDKMGY) are cytoplasmic. A helical transmembrane segment spans residues 457-477 (GVWFFFASLMLCSIVIVFFLI). At 478 to 540 (PETKGIPLES…RLESVQPKEA (63 aa)) the chain is on the extracellular side. The interval 519-540 (IEESGYTKSGEQRLESVQPKEA) is disordered. Over residues 528–540 (GEQRLESVQPKEA) the composition is skewed to basic and acidic residues.

This sequence belongs to the major facilitator superfamily. Sugar transporter (TC 2.A.1.1) family. As to quaternary structure, interacts with creB. In terms of processing, ubiquitinated. Deubiquitinated by creB, probably to control its activity or amount.

It localises to the cell membrane. Functionally, integral membrane transporter that imports quinic acid to be catabolized as a carbon source. The polypeptide is Probable quinate permease (qutD) (Aspergillus clavatus (strain ATCC 1007 / CBS 513.65 / DSM 816 / NCTC 3887 / NRRL 1 / QM 1276 / 107)).